The sequence spans 427 residues: MKLLIKGGTVVDPVAGKIEEKDVFIVDGKIARAGAHVNTAGAEVLDASGKLVVPGLIDMHVHLREPGFEARETIYTGTRAAARGGFTSVACMPNTSPVADNGAVISFIKACGLKGAVNVYPIGAITRGSKGEELAEMGDMKEAGAVAFSDDGMPVMNAGLMRRALQYAGMLGMVVISHCEDKNLSAGGVMHEGYVSTMLGLKGIPASAEEVMVARDILLAEETGSRVHIAHVSTAGSVRLIREAKARGVRVTAEVAPHHFTLTDEAVLGYDTSTKVNPPLRSAGDVAAVREGLADGTIDVIATDHAPHTEEEKDVEYDLAPFGMVGLETAVGLVWTELVAAGVLTPLQAVVKMTLNPARVLGIPKGTLEPGADADITIIDPDLSEPVDPARFASKGRNTPFRGRLLKGLPWATIVGGRVVMQDRVIR.

Zn(2+) contacts are provided by His-60 and His-62. Substrate is bound by residues 62 to 64 (HLR) and Asn-94. Zn(2+) contacts are provided by Asp-151, His-178, and His-231. Asn-277 contacts substrate. Zn(2+) is bound at residue Asp-304. Residue Asp-304 is part of the active site. Substrate contacts are provided by residues His-308 and 322 to 323 (FG).

Belongs to the metallo-dependent hydrolases superfamily. DHOase family. Class I DHOase subfamily. Zn(2+) is required as a cofactor.

The catalysed reaction is (S)-dihydroorotate + H2O = N-carbamoyl-L-aspartate + H(+). It participates in pyrimidine metabolism; UMP biosynthesis via de novo pathway; (S)-dihydroorotate from bicarbonate: step 3/3. Functionally, catalyzes the reversible cyclization of carbamoyl aspartate to dihydroorotate. This chain is Dihydroorotase, found in Pelotomaculum thermopropionicum (strain DSM 13744 / JCM 10971 / SI).